A 634-amino-acid chain; its full sequence is MSETVSHNKETRGFQSEVKQLLHLMIHSLYSNKEIFLRELISNASDASDKLRFQALSNPDLYEGNADLGVKLAFDESANTLTISDNGIGMSRDDVIEHLGTIAKSGTAEFFSKLSDDQSKDSQLIGQFGVGFYSAFIVADAVTVCTRAAGLAADEAVQWQSAGEGDYTVETITKDSRGTDIVLHMREEGKEFLNEWRLRDVISKYSDHIGIPVSIQTSVRDDEGKETGEKKWEQINKAQALWTRNKSEISEEEYQEFYKHVSHDFADPLTWSHNRVEGKNDYTSLLYIPAKAPWDMMNRDHKSGLKLYVQRVFIMDDAEQFMPSYMRFVRGLIDSNDLPLNVSREILQDNKVTQSLRNACTKRVLTMLDRMAKNDTEKYQSFWKEFGLVMKEGVAEDMANKEKVAGLLRFASTEVDSAEQTVGLASYVERMKEGQDKIYFLTADSYAAAKNSPHLEQFRAKGIEVILMFDRIDEWLMNYLTEFDGKQFQSITKAGLDLSKFEDEAEKEKQKETEEEFKSVVERTQSYLGDRVKEVRTTFKLATTPAVVVTDDFEMGTQMAKLLEAAGQAVPEVKYIFEINPEHALVKRMADEADEEVFGRWVEVLLGQAMLAERGSMEDPSQFVGAINKLLTKV.

The tract at residues 1-344 (MSETVSHNKE…SNDLPLNVSR (344 aa)) is a; substrate-binding. Residues 345-561 (EILQDNKVTQ…DFEMGTQMAK (217 aa)) form a b region. The segment at 562–634 (LLEAAGQAVP…GAINKLLTKV (73 aa)) is c.

Belongs to the heat shock protein 90 family. Homodimer.

The protein localises to the cytoplasm. In terms of biological role, molecular chaperone. Has ATPase activity. In Vibrio campbellii (strain ATCC BAA-1116), this protein is Chaperone protein HtpG.